The chain runs to 831 residues: Isethionate sulfite-lyase (831 aa).

The PFL domain maps to 32–701 (PRVFRLLERF…VVSATPNGRT (670 aa)). 2-hydroxyethane-1-sulfonate is bound by residues Arg189, Gln193, 468-470 (CTE), and Arg679. Residue Cys468 is the Cysteine radical intermediate of the active site. The Proton acceptor role is filled by Glu470. A Glycine radical domain is found at 708–831 (DGSSASHGAD…LIARTEHDVM (124 aa)). Position 806 is a glycine radical (Gly806).

This sequence belongs to the glycyl radical enzyme (GRE) family. As to quaternary structure, homodimer. Post-translationally, requires the activating protein IslB to generate the key active site glycyl radical on Gly-806 that is involved in catalysis.

It catalyses the reaction 2-hydroxyethane-1-sulfonate = acetaldehyde + sulfite + H(+). It functions in the pathway organosulfur degradation; alkanesulfonate degradation. Functionally, involved in an anaerobic respiration pathway that converts the sulfonate isethionate (2-hydroxyethanesulfonate) to ammonia, acetate and sulfide. Catalyzes the radical-mediated C-S bond cleavage of isethionate (2-hydroxyethanesulfonate) to form sulfite and acetaldehyde. This is Isethionate sulfite-lyase from Desulfovibrio desulfuricans (strain ATCC 27774 / DSM 6949 / MB).